The chain runs to 418 residues: CCA-adding enzyme (418 aa).

ATP is bound by residues serine 54 and arginine 57. The CTP site is built by serine 54 and arginine 57. Mg(2+) is bound by residues aspartate 66, aspartate 68, and aspartate 118. ATP contacts are provided by histidine 141, lysine 161, and tyrosine 170. CTP contacts are provided by histidine 141, lysine 161, and tyrosine 170.

The protein belongs to the tRNA nucleotidyltransferase/poly(A) polymerase family. Archaeal CCA-adding enzyme subfamily. In terms of assembly, homodimer. Requires Mg(2+) as cofactor.

The catalysed reaction is a tRNA precursor + 2 CTP + ATP = a tRNA with a 3' CCA end + 3 diphosphate. It carries out the reaction a tRNA with a 3' CCA end + 2 CTP + ATP = a tRNA with a 3' CCACCA end + 3 diphosphate. In terms of biological role, catalyzes the addition and repair of the essential 3'-terminal CCA sequence in tRNAs without using a nucleic acid template. Adds these three nucleotides in the order of C, C, and A to the tRNA nucleotide-73, using CTP and ATP as substrates and producing inorganic pyrophosphate. tRNA 3'-terminal CCA addition is required both for tRNA processing and repair. Also involved in tRNA surveillance by mediating tandem CCA addition to generate a CCACCA at the 3' terminus of unstable tRNAs. While stable tRNAs receive only 3'-terminal CCA, unstable tRNAs are marked with CCACCA and rapidly degraded. This is CCA-adding enzyme from Pyrobaculum islandicum (strain DSM 4184 / JCM 9189 / GEO3).